A 426-amino-acid polypeptide reads, in one-letter code: Squamosa promoter-binding-like protein 10 (426 aa).

Residues 178-255 form an SBP-type zinc finger; it reads PPRCQAEGCK…AEHNRRRRKP (78 aa). Zn(2+) is bound by residues cysteine 181, cysteine 186, cysteine 203, histidine 206, cysteine 222, cysteine 225, histidine 229, and cysteine 241. Positions 238-254 match the Bipartite nuclear localization signal motif; the sequence is KRSCRKRLAEHNRRRRK. Composition is skewed to low complexity over residues 268–287 and 401–417; these read DAAAAPVAAGKKPSGGAATS and SDQNNDNSHNNGGNNNN. Disordered regions lie at residues 268-290 and 392-426; these read DAAAAPVAAGKKPSGGAATSYTG and PSTATNGEVSDQNNDNSHNNGGNNNNMHLFEVDFM.

Expressed in stems, leaf sheaths, and young panicles.

It localises to the nucleus. In terms of biological role, trans-acting factor that binds specifically to the consensus nucleotide sequence 5'-TNCGTACAA-3'. In Oryza sativa subsp. indica (Rice), this protein is Squamosa promoter-binding-like protein 10 (SPL10).